The primary structure comprises 591 residues: CTP synthase 1-B (591 aa).

Residues 300 to 554 (SIALVGKYTK…LASVGRLSQY (255 aa)) enclose the Glutamine amidotransferase type-1 domain. Catalysis depends on for GATase activity residues Cys-399, His-526, and Glu-528. Over residues 562–572 (SPRDTYSDRSE) the composition is skewed to basic and acidic residues. The tract at residues 562–581 (SPRDTYSDRSENSSPDAEIA) is disordered.

The protein belongs to the CTP synthase family.

The enzyme catalyses UTP + L-glutamine + ATP + H2O = CTP + L-glutamate + ADP + phosphate + 2 H(+). Its pathway is pyrimidine metabolism; CTP biosynthesis via de novo pathway; CTP from UDP: step 2/2. In terms of biological role, this enzyme is involved in the de novo synthesis of CTP, a precursor of DNA, RNA and phospholipids. Catalyzes the ATP-dependent amination of UTP to CTP with either L-glutamine or ammonia as a source of nitrogen. This is CTP synthase 1-B (ctps1-b) from Xenopus laevis (African clawed frog).